The following is a 260-amino-acid chain: MSRNKVEICGVDTSKLPVLKNEEMRKLFRQLQDEGDDSAREKLVNGNLRLVLSVIQRFNNRGEYVDDLFQVGCIGLMKSIDNFDLSHNVKFSTYAVPMIIGEIRRYLRDNNPIRVSRSLRDIAYKALQVRERLISETSKEPTAEDIAKVLEVPHEEIVFALDAIQDPVSLFEPIYNDGGDPIYVMDQISDERNTDSQWIEELALKEGMRRLNDREKMILRKRFFQGKTQMEVAEEIGISQAQVSRLEKAAIKQMNKNIHQ.

The tract at residues 1–71 (MSRNKVEICG…GEYVDDLFQV (71 aa)) is recognizes anti-sigma-G factor Gin (csfB). Positions 67–80 (DLFQVGCIGLMKSI) match the Polymerase core binding motif. A DNA-binding region (H-T-H motif) is located at residues 229-248 (QMEVAEEIGISQAQVSRLEK).

The protein belongs to the sigma-70 factor family. In terms of assembly, interacts with anti-sigma-G factor Gin (csfB).

With respect to regulation, activity repressed by anti-sigma-G factor Gin (csfB) and Lon protease during the early stages of forespore development. When both Gin and sigma-G are expressed in E.coli Gin inhibits sigma-G activity, strongly suggesting Gin inhibits by direct physical interaction. Functionally, sigma factors are initiation factors that promote the attachment of RNA polymerase to specific initiation sites and are then released. This sigma factor is responsible for the expression of sporulation specific genes in the forespore. The protein is RNA polymerase sigma-G factor (sigG) of Bacillus subtilis (strain 168).